Here is a 330-residue protein sequence, read N- to C-terminus: tRNA uridine(34) hydroxylase (330 aa).

Residues 123 to 217 (SDPEVILVDT…YLEEVKQEES (95 aa)) enclose the Rhodanese domain. The Cysteine persulfide intermediate role is filled by Cys-177.

It belongs to the TrhO family.

The catalysed reaction is uridine(34) in tRNA + AH2 + O2 = 5-hydroxyuridine(34) in tRNA + A + H2O. In terms of biological role, catalyzes oxygen-dependent 5-hydroxyuridine (ho5U) modification at position 34 in tRNAs. This Shewanella sp. (strain MR-4) protein is tRNA uridine(34) hydroxylase.